We begin with the raw amino-acid sequence, 320 residues long: MRSAQVYRWQIPMDAGVVLRDRRLKTRDGLYVCLREGEREGWGEISPLPGFSQETWEEAQSVLLAWVNNWLAGDCELPQMPSVAFGVSCALAELADTLPQAANYRAAPLCNGDPDDLILKLADMPGEKVAKVKVGLYEAVRDGMVVNLLLEAIPDLHLRLDANRAWTPLKGQQFAKYVNPDYRHRIAFLEEPCKTRDDSRAFARETGIAIAWDESLREPDFAFVAEEGVRAVVIKPTLTGSLEKVREQVQAAHALGLTAVISSSIESSLGLTQLARIAAWLTPDTIPGLDTLDLMQAQQVRRWPGSTLPVVEVDALERLL.

Catalysis depends on K133, which acts as the Proton donor. Mg(2+)-binding residues include D161, E190, and D213. K235 (proton acceptor) is an active-site residue.

Belongs to the mandelate racemase/muconate lactonizing enzyme family. MenC type 1 subfamily. A divalent metal cation serves as cofactor.

It carries out the reaction (1R,6R)-6-hydroxy-2-succinyl-cyclohexa-2,4-diene-1-carboxylate = 2-succinylbenzoate + H2O. It participates in quinol/quinone metabolism; 1,4-dihydroxy-2-naphthoate biosynthesis; 1,4-dihydroxy-2-naphthoate from chorismate: step 4/7. The protein operates within quinol/quinone metabolism; menaquinone biosynthesis. Its function is as follows. Converts 2-succinyl-6-hydroxy-2,4-cyclohexadiene-1-carboxylate (SHCHC) to 2-succinylbenzoate (OSB). The sequence is that of o-succinylbenzoate synthase from Escherichia coli O139:H28 (strain E24377A / ETEC).